We begin with the raw amino-acid sequence, 242 residues long: Trypsin-1 (242 aa).

A signal peptide spans 1 to 15; sequence MISLVFVLLIGAAFA. The propeptide at 16-20 is activation peptide; sequence TEDDK. The Peptidase S1 domain maps to 21 to 240; that stretch reads IVGGYECKAY…FNDWLTSTMA (220 aa). Cystine bridges form between C27–C156, C45–C61, C129–C229, C136–C202, C167–C181, and C192–C216. Catalysis depends on H60, which acts as the Charge relay system. Ca(2+) is bound by residues E72, N74, V77, and E82. D104 acts as the Charge relay system in catalysis. S196 (charge relay system) is an active-site residue.

It belongs to the peptidase S1 family. It depends on Ca(2+) as a cofactor.

It is found in the secreted. The protein localises to the extracellular space. It carries out the reaction Preferential cleavage: Arg-|-Xaa, Lys-|-Xaa.. This chain is Trypsin-1, found in Salmo salar (Atlantic salmon).